The primary structure comprises 244 residues: 2,3-bisphosphoglycerate-dependent phosphoglycerate mutase (244 aa).

Substrate-binding positions include Arg8 to Asn15, Thr21 to Gly22, Arg60, Glu87 to Tyr90, Lys98, Arg114 to Arg115, and Gly181 to Asn182. His9 serves as the catalytic Tele-phosphohistidine intermediate. Glu87 functions as the Proton donor/acceptor in the catalytic mechanism.

This sequence belongs to the phosphoglycerate mutase family. BPG-dependent PGAM subfamily.

It carries out the reaction (2R)-2-phosphoglycerate = (2R)-3-phosphoglycerate. The protein operates within carbohydrate degradation; glycolysis; pyruvate from D-glyceraldehyde 3-phosphate: step 3/5. Functionally, catalyzes the interconversion of 2-phosphoglycerate and 3-phosphoglycerate. In Frankia alni (strain DSM 45986 / CECT 9034 / ACN14a), this protein is 2,3-bisphosphoglycerate-dependent phosphoglycerate mutase.